Here is a 356-residue protein sequence, read N- to C-terminus: Glutamine synthetase (356 aa).

The GS beta-grasp domain occupies 19–99 (VIAEYIWIGG…VICDTYTPAG (81 aa)). The GS catalytic domain maps to 106-356 (KRHGAAKIFS…IAETTLLWKP (251 aa)).

The protein belongs to the glutamine synthetase family. Homooctamer. Found at highest levels in root nodules.

Its subcellular location is the cytoplasm. It carries out the reaction L-glutamate + NH4(+) + ATP = L-glutamine + ADP + phosphate + H(+). In Alnus glutinosa (European alder), this protein is Glutamine synthetase (GLN1).